A 372-amino-acid polypeptide reads, in one-letter code: DNA replication and repair protein RecF (372 aa).

Residue 30–37 (GENGQGKT) participates in ATP binding.

This sequence belongs to the RecF family.

The protein localises to the cytoplasm. The RecF protein is involved in DNA metabolism; it is required for DNA replication and normal SOS inducibility. RecF binds preferentially to single-stranded, linear DNA. It also seems to bind ATP. The protein is DNA replication and repair protein RecF of Anaeromyxobacter sp. (strain K).